We begin with the raw amino-acid sequence, 501 residues long: MPDAVGAIDQGTTSTRFIVFDRRGTILAQAQREHEQIFPRPGWVEHDPREIWRNTHAVMREGLARAGLAPEDLAAIGITNQRETAVLWDRRTGEPLHDAIVWQDTRTDRSVAALARDGGRDRFRAVTGLPLASYFSASKLAWLLDHVEGARAKAEDGTALFGTIDSWLVWNLTGGPDGGLHVTDVTNASRTQLMSLATLDWDEAMLGVFRIPRAVLPTIVSSSAVLGEARDPFPGVPLGGILGDQQAALFGQTCFSAGEAKNTYGTGCFALMNTGPAPVASSAGLITTVAYRLDGRPPAYALEGSIAITGALVQWLRDNLGLIGASSEIEGLARSVEDNGGVYVVPAFSGLYAPHWRDDARGLIIGLTRYANRGHIARACLEATAYQTREVLEAMERDSGCPIAELRCDGGMTVNDLLMQFQADILDRPTLRPKVSETTALGAAYAAGLATGFWKTLEDLRDNWAVDKRWHPHIQAEERRALFAGWSRAVERSFGWVEENA.

Thr12 contributes to the ADP binding site. Positions 12, 13, and 14 each coordinate ATP. Thr12 is a binding site for sn-glycerol 3-phosphate. Arg16 is an ADP binding site. Sn-glycerol 3-phosphate-binding residues include Arg82, Glu83, Tyr134, and Asp244. Residues Arg82, Glu83, Tyr134, Asp244, and Gln245 each coordinate glycerol. Thr266 and Gly310 together coordinate ADP. ATP-binding residues include Thr266, Gly310, Gln314, and Gly411. Residues Gly411 and Asn415 each contribute to the ADP site.

The protein belongs to the FGGY kinase family.

It catalyses the reaction glycerol + ATP = sn-glycerol 3-phosphate + ADP + H(+). Its pathway is polyol metabolism; glycerol degradation via glycerol kinase pathway; sn-glycerol 3-phosphate from glycerol: step 1/1. With respect to regulation, inhibited by fructose 1,6-bisphosphate (FBP). Its function is as follows. Key enzyme in the regulation of glycerol uptake and metabolism. Catalyzes the phosphorylation of glycerol to yield sn-glycerol 3-phosphate. The polypeptide is Glycerol kinase (Methylorubrum extorquens (strain PA1) (Methylobacterium extorquens)).